Here is a 753-residue protein sequence, read N- to C-terminus: Eukaryotic translation initiation factor 3 subunit B (753 aa).

One can recognise an RRM domain in the interval 42-129; the sequence is TMLVVDNIPI…NVLHVNRFGD (88 aa). WD repeat units lie at residues 142 to 185, 203 to 241, 321 to 362, 537 to 580, and 595 to 640; these read DLPS…WWNG, NSKW…GPIG, DTQS…LLDR, LDSK…DERR, and GEHY…LLHE. Positions 723–753 form a coiled coil; it reads KSKAKIDVKGQEARVEEWVEELIDETEELSM.

It belongs to the eIF-3 subunit B family. In terms of assembly, component of the eukaryotic translation initiation factor 3 (eIF-3) complex.

The protein resides in the cytoplasm. Functionally, RNA-binding component of the eukaryotic translation initiation factor 3 (eIF-3) complex, which is involved in protein synthesis of a specialized repertoire of mRNAs and, together with other initiation factors, stimulates binding of mRNA and methionyl-tRNAi to the 40S ribosome. The eIF-3 complex specifically targets and initiates translation of a subset of mRNAs involved in cell proliferation. The chain is Eukaryotic translation initiation factor 3 subunit B from Cryptococcus neoformans var. neoformans serotype D (strain B-3501A) (Filobasidiella neoformans).